The chain runs to 640 residues: Serine/threonine-protein phosphatase with EF-hands 1 (640 aa).

Residues 16-45 (VVRAALIIQNWYRRYRARLSARQHYALAIF) form the IQ domain. The tract at residues 122–445 (INLLLQAFKQ…PQFFQYQVTS (324 aa)) is catalytic. Mn(2+) contacts are provided by aspartate 173, histidine 175, aspartate 202, and asparagine 234. Histidine 235 functions as the Proton donor in the catalytic mechanism. Mn(2+) contacts are provided by histidine 286 and histidine 393. 3 EF-hand domains span residues 473 to 508 (ARKTDLINAFELRDHSRTGKISLAQWAFSMESILGL), 556 to 591 (RYRSDLKIIFNIIDTDQSGLISMDEFRTMWKLFNAH), and 596 to 631 (IDDSQIDELASTMDSNKDGNIDFNEFLRAFYVVHKY). Ca(2+)-binding residues include aspartate 569, aspartate 571, serine 573, glutamate 580, aspartate 609, asparagine 611, aspartate 613, asparagine 615, and glutamate 620.

It belongs to the PPP phosphatase family. It depends on Mn(2+) as a cofactor. Mg(2+) serves as cofactor.

The enzyme catalyses O-phospho-L-seryl-[protein] + H2O = L-seryl-[protein] + phosphate. It catalyses the reaction O-phospho-L-threonyl-[protein] + H2O = L-threonyl-[protein] + phosphate. Its activity is regulated as follows. Activated by calcium. In terms of biological role, may have a role in the recovery or adaptation response of photoreceptors. May have a role in development. This is Serine/threonine-protein phosphatase with EF-hands 1 (Ppef1) from Rattus norvegicus (Rat).